Consider the following 427-residue polypeptide: Tyrosine--tRNA ligase (427 aa).

Position 33 (Tyr-33) interacts with L-tyrosine. Residues 38–47 carry the 'HIGH' region motif; it reads PTAPSLHVGN. Tyr-168 and Gln-172 together coordinate L-tyrosine. The 'KMSKS' region motif lies at 228 to 232; the sequence is KFGKS. Lys-231 contributes to the ATP binding site. Residues 358 to 426 form the S4 RNA-binding domain; that stretch reads EHMLDLVAST…GKKHHYLIKV (69 aa).

This sequence belongs to the class-I aminoacyl-tRNA synthetase family. TyrS type 1 subfamily. Homodimer.

Its subcellular location is the cytoplasm. The enzyme catalyses tRNA(Tyr) + L-tyrosine + ATP = L-tyrosyl-tRNA(Tyr) + AMP + diphosphate + H(+). Its function is as follows. Catalyzes the attachment of tyrosine to tRNA(Tyr) in a two-step reaction: tyrosine is first activated by ATP to form Tyr-AMP and then transferred to the acceptor end of tRNA(Tyr). The chain is Tyrosine--tRNA ligase from Amoebophilus asiaticus (strain 5a2).